Here is an 815-residue protein sequence, read N- to C-terminus: uncharacterized protein (815 aa).

Residues 1-21 (MNIYRLSFVSCLVMAMPCAMA) form the signal peptide. Cys795 and Cys814 are disulfide-bonded.

It belongs to the fimbrial export usher family.

The protein localises to the cell outer membrane. Functionally, could be involved in the export and assembly of the putative YbgD fimbrial subunit across the outer membrane. This is an uncharacterized protein from Escherichia coli (strain K12).